Reading from the N-terminus, the 389-residue chain is Probable zinc transporter zip2 (389 aa).

7 helical membrane-spanning segments follow: residues 6–26 (GWIL…GIYL), 48–68 (LVTG…ASVM), 88–108 (VFQF…NHFL), 267–289 (VLVA…LYLA), 305–325 (SCSL…GGIG), 329–349 (FLNF…LILS), and 368–388 (HSFI…IFDS).

The protein belongs to the ZIP transporter (TC 2.A.5) family.

It localises to the endoplasmic reticulum membrane. Its function is as follows. Probable zinc transporter that may mediate zinc remobilization from the endoplasmic reticulum under zinc limitation. This chain is Probable zinc transporter zip2 (zip2), found in Schizosaccharomyces pombe (strain 972 / ATCC 24843) (Fission yeast).